Here is an 85-residue protein sequence, read N- to C-terminus: UPF0297 protein LBA0418 (85 aa).

This sequence belongs to the UPF0297 family.

This Lactobacillus acidophilus (strain ATCC 700396 / NCK56 / N2 / NCFM) protein is UPF0297 protein LBA0418.